We begin with the raw amino-acid sequence, 515 residues long: 2-isopropylmalate synthase (515 aa).

In terms of domain architecture, Pyruvate carboxyltransferase spans 5 to 267 (VIIFDTTLRD…HTSLKNDEIH (263 aa)). 4 residues coordinate Mn(2+): Asp14, His202, His204, and Asn238. Positions 392-515 (KLNYLSVQSG…EIKQNKITTV (124 aa)) are regulatory domain.

The protein belongs to the alpha-IPM synthase/homocitrate synthase family. LeuA type 1 subfamily. Homodimer. It depends on Mn(2+) as a cofactor.

It localises to the cytoplasm. The catalysed reaction is 3-methyl-2-oxobutanoate + acetyl-CoA + H2O = (2S)-2-isopropylmalate + CoA + H(+). It functions in the pathway amino-acid biosynthesis; L-leucine biosynthesis; L-leucine from 3-methyl-2-oxobutanoate: step 1/4. Functionally, catalyzes the condensation of the acetyl group of acetyl-CoA with 3-methyl-2-oxobutanoate (2-ketoisovalerate) to form 3-carboxy-3-hydroxy-4-methylpentanoate (2-isopropylmalate). This chain is 2-isopropylmalate synthase, found in Aliivibrio salmonicida (strain LFI1238) (Vibrio salmonicida (strain LFI1238)).